The following is an 847-amino-acid chain: Lethal(3)malignant brain tumor-like protein 1 (847 aa).

Composition is skewed to basic and acidic residues over residues 65 to 82 (FPRE…EKGV) and 144 to 155 (AVKEGHAKKDGD). Disordered stretches follow at residues 65–87 (FPRE…SEPI), 142–163 (AEAV…PTSR), and 237–296 (VKKR…SEEK). MBT repeat units follow at residues 300–400 (WSWA…LQPP), 408–507 (FSWT…LTPP), and 516–611 (FIWE…LQPP). Residues 473 to 480 (FDNWDDTY) are interaction with monomethylated and dimethylated peptides. The segment at 639-682 (SKYSFHHRKCPTPGCDGSGHVTGRFTAHYCLSGCPLAEKNQGKL) adopts a CCHHC-type zinc-finger fold. 4 residues coordinate Zn(2+): Cys648, Cys653, His666, and Cys672. The region spanning 778–842 (WTIDEVFSFV…YNAILMFKNA (65 aa)) is the SAM domain.

In terms of assembly, homodimer.

It localises to the nucleus. Functionally, polycomb group (PcG) protein that specifically recognizes and binds mono- and dimethyllysine residues on target proteins, thereby acting as a 'reader' of a network of post-translational modifications. PcG proteins maintain the transcriptionally repressive state of genes: acts as a chromatin compaction factor by recognizing and binding mono- and dimethylated histone H1b/H1-4 at 'Lys-26' (H1bK26me1 and H1bK26me2) and histone H4 at 'Lys-20' (H4K20me1 and H4K20me2), leading to condense chromatin and repress transcription. In Gallus gallus (Chicken), this protein is Lethal(3)malignant brain tumor-like protein 1 (L3MBTL1).